Reading from the N-terminus, the 285-residue chain is Methylamine utilization protein MauF (285 aa).

7 helical membrane-spanning segments follow: residues 39–59 (LGGL…LSQT), 63–83 (GVAV…LSTW), 120–140 (AVGA…LGFG), 144–164 (FGAL…QLGF), 184–204 (FPVW…YLTY), 209–229 (ILYL…AILL), and 265–285 (ALLD…FAAL).

The protein resides in the cell membrane. Its pathway is one-carbon metabolism; methylamine degradation. The protein is Methylamine utilization protein MauF (mauF) of Methylorubrum extorquens (strain ATCC 14718 / DSM 1338 / JCM 2805 / NCIMB 9133 / AM1) (Methylobacterium extorquens).